Here is a 233-residue protein sequence, read N- to C-terminus: Probable RNA 2'-phosphotransferase (233 aa).

Belongs to the KptA/TPT1 family.

Its function is as follows. Removes the 2'-phosphate from RNA via an intermediate in which the phosphate is ADP-ribosylated by NAD followed by a presumed transesterification to release the RNA and generate ADP-ribose 1''-2''-cyclic phosphate (APPR&gt;P). May function as an ADP-ribosylase. In Hyperthermus butylicus (strain DSM 5456 / JCM 9403 / PLM1-5), this protein is Probable RNA 2'-phosphotransferase.